The chain runs to 338 residues: Ketol-acid reductoisomerase (NADP(+)) (338 aa).

Residues 1-181 (MKVFYDKDAD…GGGRAGIIET (181 aa)) enclose the KARI N-terminal Rossmann domain. NADP(+)-binding positions include 24–27 (YGSQ), arginine 47, and serine 52. Histidine 107 is a catalytic residue. Glycine 133 provides a ligand contact to NADP(+). The 146-residue stretch at 182–327 (NFREETETDL…AKLRAMMPWI (146 aa)) folds into the KARI C-terminal knotted domain. Aspartate 190, glutamate 194, glutamate 226, and glutamate 230 together coordinate Mg(2+). Substrate is bound at residue serine 251.

It belongs to the ketol-acid reductoisomerase family. Mg(2+) is required as a cofactor.

It catalyses the reaction (2R)-2,3-dihydroxy-3-methylbutanoate + NADP(+) = (2S)-2-acetolactate + NADPH + H(+). The catalysed reaction is (2R,3R)-2,3-dihydroxy-3-methylpentanoate + NADP(+) = (S)-2-ethyl-2-hydroxy-3-oxobutanoate + NADPH + H(+). It participates in amino-acid biosynthesis; L-isoleucine biosynthesis; L-isoleucine from 2-oxobutanoate: step 2/4. The protein operates within amino-acid biosynthesis; L-valine biosynthesis; L-valine from pyruvate: step 2/4. Its function is as follows. Involved in the biosynthesis of branched-chain amino acids (BCAA). Catalyzes an alkyl-migration followed by a ketol-acid reduction of (S)-2-acetolactate (S2AL) to yield (R)-2,3-dihydroxy-isovalerate. In the isomerase reaction, S2AL is rearranged via a Mg-dependent methyl migration to produce 3-hydroxy-3-methyl-2-ketobutyrate (HMKB). In the reductase reaction, this 2-ketoacid undergoes a metal-dependent reduction by NADPH to yield (R)-2,3-dihydroxy-isovalerate. In Ralstonia nicotianae (strain ATCC BAA-1114 / GMI1000) (Ralstonia solanacearum), this protein is Ketol-acid reductoisomerase (NADP(+)).